The chain runs to 437 residues: O-acetyl-L-homoserine sulfhydrylase (437 aa).

Lysine 216 is modified (N6-(pyridoxal phosphate)lysine).

The protein belongs to the trans-sulfuration enzymes family. As to quaternary structure, homohexamer. Pyridoxal 5'-phosphate serves as cofactor.

The catalysed reaction is O-acetyl-L-homoserine + hydrogen sulfide = L-homocysteine + acetate. The enzyme catalyses O-acetyl-L-homoserine + methanethiol = L-methionine + acetate + H(+). It participates in amino-acid biosynthesis; L-methionine biosynthesis via de novo pathway; L-homocysteine from O-acetyl-L-homoserine: step 1/1. Inhibited by methionine and cystathionine. In terms of biological role, catalyzes the conversion of O-acetyl-L-homoserine (OAH) into homocysteine in the methionine biosynthesis pathway. Can also use dimethyldisulfide and methanethiol as reduced sulfur sources, leading to the direct formation of methionine. Has weak cystathionine gamma-synthase activity. This Corynebacterium glutamicum (strain ATCC 13032 / DSM 20300 / JCM 1318 / BCRC 11384 / CCUG 27702 / LMG 3730 / NBRC 12168 / NCIMB 10025 / NRRL B-2784 / 534) protein is O-acetyl-L-homoserine sulfhydrylase.